The sequence spans 335 residues: D-arabinose 1-dehydrogenase (335 aa).

Y58 acts as the Proton donor in catalysis. H124 is a substrate binding site. Residue S221 to A287 participates in NAD(+) binding.

This sequence belongs to the aldo/keto reductase family. Aldo/keto reductase 2 subfamily.

The catalysed reaction is D-arabinose + NAD(+) = D-arabinono-1,4-lactone + NADH + H(+). This Saccharomyces cerevisiae (strain ATCC 204508 / S288c) (Baker's yeast) protein is D-arabinose 1-dehydrogenase (ARA2).